Here is a 157-residue protein sequence, read N- to C-terminus: CAPA peptides (157 aa).

An N-terminal signal peptide occupies residues 1 to 21 (MQPTMRIIVSMALLAYAVASA). Residues 22 to 28 (YHSNVKL) constitute a propeptide that is removed on maturation. A Valine amide modification is found at valine 42. Positions 45 to 66 (ASGNTWQLPLNDLYPEYEPAQV) are excised as a propeptide. Glutamine 69 carries the pyrrolidone carboxylic acid; partial modification. Valine amide is present on valine 76. 2 positions are modified to leucine amide: leucine 85 and leucine 117. Positions 120 to 157 (AFKNDDDEITIQNESNDHSEPEQTELIHEDRRKRQTLN) are excised as a propeptide. The segment at 131–157 (QNESNDHSEPEQTELIHEDRRKRQTLN) is disordered. The span at 134–151 (SNDHSEPEQTELIHEDRR) shows a compositional bias: basic and acidic residues.

The protein belongs to the pyrokinin family. In terms of tissue distribution, CAPA-periviscerokinin 1: Expressed in corpora cardiaca (CC), corpora allata (CA), antennal lobe (AL) and gnathal ganglion (GNG) (at protein level). Expression detected in most animals in CC and CA and in some animals in AL and GNG (at protein level). CAPA-periviscerokinin 2: Expressed in corpora cardiaca (CC), corpora allata (CA), antennal lobe (AL) and gnathal ganglion (GNG) (at protein level). For non-pyroglutamate form, expression in AL detected in all animals, in CC, CA and GNG in most animals (at protein level). For pyroglutamate form, expression in CC and CA detected in most animals, in AL and GNG in some animals (at protein level). CAPA-periviscerokinin 3: Expressed in corpora cardiaca (CC), corpora allata (CA), antennal lobe (AL) and gnathal ganglion (GNG). Expression detected in most animals in CC and CA and in some animals in AL and GNG (at protein level). CAPA-precursor-related peptide 3: Expressed in corpora cardiaca (CC), corpora allata (CA), antennal lobe (AL) and gnathal ganglion (GNG) (at protein level). Expression in CC and CA detected in some animals, expression in Al and GNG detected in few animals (at protein level). CAPA-trypto-pyrokinin: Expressed in corpora cardiaca (CC), corpora allata (CA), antennal lobe (AL) and gnathal ganglion (GNG) (at protein level). Expression in CC, CA and GNG detected in most animals, in AL in some animals (at protein level).

The protein localises to the secreted. Functionally, myoactive. In Agrotis ipsilon (Black cutworm moth), this protein is CAPA peptides.